A 657-amino-acid chain; its full sequence is Glycogen debranching enzyme (657 aa).

The active-site Nucleophile is the Asp-336. The Proton donor role is filled by Glu-371. Basic and acidic residues predominate over residues 458–467 (NEANGEENRD). The segment at 458 to 479 (NEANGEENRDGTNNNYSNNHGK) is disordered.

Belongs to the glycosyl hydrolase 13 family.

The enzyme catalyses Hydrolysis of (1-&gt;6)-alpha-D-glucosidic linkages to branches with degrees of polymerization of three or four glucose residues in limit dextrin.. It functions in the pathway glycan degradation; glycogen degradation. Functionally, removes maltotriose and maltotetraose chains that are attached by 1,6-alpha-linkage to the limit dextrin main chain, generating a debranched limit dextrin. This is Glycogen debranching enzyme from Escherichia coli (strain 55989 / EAEC).